Reading from the N-terminus, the 248-residue chain is MRFDVVTLFPEMFSALTQWGITGRACQQSLASVHLWNPRDFCPDPRKTVDDRAYGGGPGMVMMAKPLEDTVAGIQASHQAAGIKSGPICLLAPQGERFSQKIATDILDYGNLSFICGRYEAVDQRFIDRNVDIQLSIGDFVLSGGEIPAMTIMDAVIRLVPGALGDGESATQDSFMNGLLDYPHYTRPEIYENLLVPDVLLGGHHAKIADWRRQKSLELTLRLRPDLIESARANGLLTREDEQFLRSL.

Residues Gly117 and Ile137–Leu142 contribute to the S-adenosyl-L-methionine site.

Belongs to the RNA methyltransferase TrmD family. Homodimer.

Its subcellular location is the cytoplasm. It carries out the reaction guanosine(37) in tRNA + S-adenosyl-L-methionine = N(1)-methylguanosine(37) in tRNA + S-adenosyl-L-homocysteine + H(+). Its function is as follows. Specifically methylates guanosine-37 in various tRNAs. This is tRNA (guanine-N(1)-)-methyltransferase from Polynucleobacter asymbioticus (strain DSM 18221 / CIP 109841 / QLW-P1DMWA-1) (Polynucleobacter necessarius subsp. asymbioticus).